Here is a 490-residue protein sequence, read N- to C-terminus: Trigger factor (490 aa).

The 82-residue stretch at 162–243 (GDFVSIDLSA…VGSIKERELP (82 aa)) folds into the PPIase FKBP-type domain. The tract at residues 433-490 (VDAVLGPRRGGADEAGAEAEAAEEKPAKAKKSADSEKTDKSEKAEKKSKKKSKDDDAE) is disordered. Positions 454 to 477 (AEEKPAKAKKSADSEKTDKSEKAE) are enriched in basic and acidic residues.

It belongs to the FKBP-type PPIase family. Tig subfamily.

The protein localises to the cytoplasm. The catalysed reaction is [protein]-peptidylproline (omega=180) = [protein]-peptidylproline (omega=0). Functionally, involved in protein export. Acts as a chaperone by maintaining the newly synthesized protein in an open conformation. Functions as a peptidyl-prolyl cis-trans isomerase. This is Trigger factor from Mycobacteroides abscessus (strain ATCC 19977 / DSM 44196 / CCUG 20993 / CIP 104536 / JCM 13569 / NCTC 13031 / TMC 1543 / L948) (Mycobacterium abscessus).